The following is a 466-amino-acid chain: F-box/LRR-repeat protein fbxl-1 (466 aa).

The F-box domain maps to 54–100 (SLINRVLPKEVLLKVFSFLDTKALCRSAQVCRSWSILALDGSNWQRV). LRR repeat units lie at residues 122–147 (GGFLKELSLKGCENVHDSALRTFTSR), 148–173 (CPNLEHLSLYRCKRVTDASCENLGRY), 174–199 (CHKLNYLNLENCSSITDRAMKYIGDG), 200–225 (CPNLSYLNISWCDAIQDRGVQIILSN), 226–251 (CKSLDTLILRGCEGLTENVFGSVEAH), 252–277 (MGAIKKLNLLQCFQLTDITVQNIANG), 278–303 (ATALEYLCMSNCNQISDRSLVSLGQH), 304–329 (SHNLKVLELSGCTLLGDNGFIPLARG), 330–355 (CRQLERLDMEDCSLISDHTINSLANN), 356–381 (CTALRELSLSHCELITDESIQNLASK), and 408–433 (CKALKRIDLYDCQNVSKEAIVRFQHH).

As to quaternary structure, component of the SCF (SKP1-CUL1-F-box protein)-type E3 ubiquitin ligase complex. In terms of tissue distribution, expressed in neuroglial cells such as the socket cell and sheath cell, neurosecretory motor neurons and regions around the pharynx and anus.

It localises to the perikaryon. The protein localises to the cell projection. The protein resides in the dendrite. It is found in the cilium. Its subcellular location is the axon. Its function is as follows. Substrate-recognition component of the SCF (SKP1-CUL1-F-box protein)-type E3 ubiquitin ligase complex. Plays a role in regulating the entry into the dauer state. In hermaphrodites, may play a role in modulating the rate of defecation. The polypeptide is F-box/LRR-repeat protein fbxl-1 (Caenorhabditis elegans).